The primary structure comprises 65 residues: Conotoxin Lt5.1 (65 aa).

The signal sequence occupies residues Met-1–Ser-19. A propeptide spanning residues Val-20–Asn-48 is cleaved from the precursor.

Belongs to the conotoxin T superfamily. Contains 2 disulfide bonds that can be either 'C1-C3, C2-C4' or 'C1-C4, C2-C3', since these disulfide connectivities have been observed for conotoxins with cysteine framework V (for examples, see AC P0DQQ7 and AC P81755). In terms of tissue distribution, expressed by the venom duct.

Its subcellular location is the secreted. In Conus litteratus (Lettered cone), this protein is Conotoxin Lt5.1.